The chain runs to 195 residues: Kiwa protein KwaA (195 aa).

The next 3 membrane-spanning stretches (helical) occupy residues 10–30 (GLYI…TAKI), 46–66 (LVLT…SIYF), and 117–137 (IAYL…DKYY).

The protein resides in the cell inner membrane. Functionally, component of antiviral defense system Kiwa, composed of KwaA and KwaB. Expression of Kiwa in E.coli (strain MG1655) confers resistance to phages lambda and SECphi18. This Escherichia coli O55:H7 (strain RM12579 / EPEC) protein is Kiwa protein KwaA.